The following is a 69-amino-acid chain: Putative membrane protein insertion efficiency factor (69 aa).

Belongs to the UPF0161 family.

The protein resides in the cell membrane. Could be involved in insertion of integral membrane proteins into the membrane. This is Putative membrane protein insertion efficiency factor from Thermomicrobium roseum (strain ATCC 27502 / DSM 5159 / P-2).